Here is a 266-residue protein sequence, read N- to C-terminus: Small ribosomal subunit protein eS1 (266 aa).

Residues 235–266 (GGAGGAAKASGDDTGAKVERADGYEPPIQETV) are disordered. The span at 244–257 (SGDDTGAKVERADG) shows a compositional bias: basic and acidic residues.

Belongs to the eukaryotic ribosomal protein eS1 family. Component of the small ribosomal subunit. Mature ribosomes consist of a small (40S) and a large (60S) subunit. The 40S subunit contains about 33 different proteins and 1 molecule of RNA (18S). The 60S subunit contains about 49 different proteins and 3 molecules of RNA (28S, 5.8S and 5S).

It is found in the cytoplasm. Component of the small ribosomal subunit. The ribosome is a large ribonucleoprotein complex responsible for the synthesis of proteins in the cell. The sequence is that of Small ribosomal subunit protein eS1 (rps3a) from Oryzias latipes (Japanese rice fish).